Reading from the N-terminus, the 327-residue chain is tRNA dimethylallyltransferase (327 aa).

18–25 is an ATP binding site; the sequence is GPTASGKT. 20 to 25 serves as a coordination point for substrate; sequence TASGKT. Interaction with substrate tRNA stretches follow at residues 43–46, 167–171, and 251–256; these read DSAL, QRVQR, and RCVGYR.

It belongs to the IPP transferase family. In terms of assembly, monomer. Mg(2+) is required as a cofactor.

It catalyses the reaction adenosine(37) in tRNA + dimethylallyl diphosphate = N(6)-dimethylallyladenosine(37) in tRNA + diphosphate. Its function is as follows. Catalyzes the transfer of a dimethylallyl group onto the adenine at position 37 in tRNAs that read codons beginning with uridine, leading to the formation of N6-(dimethylallyl)adenosine (i(6)A). The polypeptide is tRNA dimethylallyltransferase (Methylibium petroleiphilum (strain ATCC BAA-1232 / LMG 22953 / PM1)).